We begin with the raw amino-acid sequence, 578 residues long: A-type ATP synthase subunit A (578 aa).

228–235 contacts ATP; sequence GPFGSGKT.

It belongs to the ATPase alpha/beta chains family. Has multiple subunits with at least A(3), B(3), C, D, E, F, H, I and proteolipid K(x).

It localises to the cell membrane. It carries out the reaction ATP + H2O + 4 H(+)(in) = ADP + phosphate + 5 H(+)(out). Functionally, produces ATP from ADP in the presence of a proton gradient across the membrane. The archaeal alpha chain is a catalytic subunit. In terms of biological role, component of the A-type ATP synthase that produces ATP from ADP in the presence of a proton gradient across the membrane. The A chain is the catalytic subunit. This chain is A-type ATP synthase subunit A, found in Methanosarcina barkeri.